The sequence spans 142 residues: Large ribosomal subunit protein uL11 (142 aa).

This sequence belongs to the universal ribosomal protein uL11 family. As to quaternary structure, part of the ribosomal stalk of the 50S ribosomal subunit. Interacts with L10 and the large rRNA to form the base of the stalk. L10 forms an elongated spine to which L12 dimers bind in a sequential fashion forming a multimeric L10(L12)X complex. In terms of processing, one or more lysine residues are methylated.

Functionally, forms part of the ribosomal stalk which helps the ribosome interact with GTP-bound translation factors. This Baumannia cicadellinicola subsp. Homalodisca coagulata protein is Large ribosomal subunit protein uL11.